The primary structure comprises 475 residues: Glutamyl-tRNA(Gln) amidotransferase subunit A (475 aa).

Catalysis depends on charge relay system residues lysine 69 and serine 144. Serine 168 functions as the Acyl-ester intermediate in the catalytic mechanism.

Belongs to the amidase family. GatA subfamily. As to quaternary structure, heterotrimer of A, B and C subunits.

It carries out the reaction L-glutamyl-tRNA(Gln) + L-glutamine + ATP + H2O = L-glutaminyl-tRNA(Gln) + L-glutamate + ADP + phosphate + H(+). Functionally, allows the formation of correctly charged Gln-tRNA(Gln) through the transamidation of misacylated Glu-tRNA(Gln) in organisms which lack glutaminyl-tRNA synthetase. The reaction takes place in the presence of glutamine and ATP through an activated gamma-phospho-Glu-tRNA(Gln). The polypeptide is Glutamyl-tRNA(Gln) amidotransferase subunit A (Methanococcoides burtonii (strain DSM 6242 / NBRC 107633 / OCM 468 / ACE-M)).